A 450-amino-acid polypeptide reads, in one-letter code: Runt-related transcription factor 1 (450 aa).

Residues 1–25 (MRIPVDASTSRRFTPPSTALSPGKM) form a disordered region. Positions 7-20 (ASTSRRFTPPSTAL) are enriched in polar residues. Position 14 is a phosphothreonine (Thr14). Position 21 is a phosphoserine (Ser21). Lys24 and Lys43 each carry N6-acetyllysine. The Runt domain occupies 50–178 (SMVEVLADHP…TVDGPREPRR (129 aa)). The tract at residues 80–84 (RCNKT) is interaction with DNA. The chloride site is built by Asn112, Glu116, Arg139, and Val170. Interaction with DNA regions lie at residues 135 to 143 (RFVGRSGRG) and 168 to 177 (ITVDGPREPR). Disordered regions lie at residues 170–195 (VDGP…LSFS) and 209–252 (MRVS…SPPW). Residues Ser193 and Ser212 each carry the phosphoserine modification. The segment covering 222–247 (PRASLNHSTAFNPQPQSQMQDARQIQ) has biased composition (polar residues). A Phosphoserine; by HIPK2 modification is found at Ser249. 2 positions are modified to phosphoserine: Ser266 and Ser267. Phosphothreonine; by HIPK2 is present on Thr272. Ser275 is subject to Phosphoserine; by HIPK2. Residues 290-369 (SSRLSTAPDL…SQAQAGPFQT (80 aa)) form an interaction with KAT6A region. Phosphothreonine is present on Thr295. Residues 306-398 (RQFPTLPSIS…MVGGERSPPR (93 aa)) form an interaction with KAT6B region. Residues 360–400 (SQAQAGPFQTGSPSYHLYYGTSAGSYQFSMVGGERSPPRIL) are interaction with FOXP3. The disordered stretch occupies residues 410-450 (AALLNPSLPSQSDVVETEGSHSNSPTNMPPARLEEAVWRPY). The span at 416-435 (SLPSQSDVVETEGSHSNSPT) shows a compositional bias: polar residues. Residue Ser433 is modified to Phosphoserine. Positions 441 to 450 (RLEEAVWRPY) are enriched in basic and acidic residues.

Heterodimer with CBFB. RUNX1 binds DNA as a monomer and through the Runt domain. DNA-binding is increased by heterodimerization. Interacts with TLE1 and ALYREF/THOC4. Interacts with ELF1, ELF2 and SPI1. Interacts via its Runt domain with the ELF4 N-terminal region. Interaction with ELF2 isoform 2 (NERF-1a) may act to repress RUNX1-mediated transactivation. Interacts with KAT6A and KAT6B. Interacts with SUV39H1, leading to abrogation of transactivating and DNA-binding properties of RUNX1. Interacts with YAP1 and HIPK2. Interaction with CDK6 prevents myeloid differentiation, reducing its transcription transactivation activity. Found in a complex with PRMT5, RUNX1 and CBFB. Interacts with FOXP3. Interacts with TBX21. Interacts with DPF2. In terms of processing, phosphorylated in its C-terminus upon IL-6 treatment. Phosphorylation enhances interaction with KAT6A. Post-translationally, methylated. Phosphorylated in Ser-249 Thr-272 and Ser-275 by HIPK2 when associated with CBFB and DNA. This phosphorylation promotes subsequent EP300 phosphorylation. Expressed in skeletal muscle.

It localises to the nucleus. In terms of biological role, CBF binds to the core site, 5'-PYGPYGGT-3', of a number of enhancers and promoters, including murine leukemia virus, polyomavirus enhancer, T-cell receptor enhancers, LCK, IL-3 and GM-CSF promoters. The alpha subunit binds DNA and appears to have a role in the development of normal hematopoiesis. Isoform AML-1L interferes with the transactivation activity of RUNX1. Acts synergistically with ELF4 to transactivate the IL-3 promoter and with ELF2 to transactivate the BLK promoter. Inhibits KAT6B-dependent transcriptional activation. Controls the anergy and suppressive function of regulatory T-cells (Treg) by associating with FOXP3. Activates the expression of IL2 and IFNG and down-regulates the expression of TNFRSF18, IL2RA and CTLA4, in conventional T-cells. Positively regulates the expression of RORC in T-helper 17 cells. This is Runt-related transcription factor 1 (Runx1) from Rattus norvegicus (Rat).